A 279-amino-acid chain; its full sequence is Small ribosomal subunit protein uS2 (279 aa).

Residues 232 to 260 (KVDMEAAGENAPKGAGKKKNTKARMDKAE) form a disordered region.

It belongs to the universal ribosomal protein uS2 family.

In Phocaeicola vulgatus (strain ATCC 8482 / DSM 1447 / JCM 5826 / CCUG 4940 / NBRC 14291 / NCTC 11154) (Bacteroides vulgatus), this protein is Small ribosomal subunit protein uS2.